Consider the following 240-residue polypeptide: Insulin-like growth factor-binding protein 3 receptor (240 aa).

The signal sequence occupies residues 1–38; the sequence is MGNCQAGHNLHLCLAHHPPLVCATLILLLLGLSGLGLG. Over 39–204 the chain is Extracellular; it reads SFLLTHRTGL…SEELALCGSR (166 aa). N-linked (GlcNAc...) asparagine glycans are attached at residues N73, N101, and N167. Residues 205-225 traverse the membrane as a helical segment; that stretch reads LLVLGSFLLLFCGLLCCVTAM. The Cytoplasmic segment spans residues 226–240; the sequence is CFHPRRESHWSRTRL.

In terms of assembly, interacts with IGFBP3. Interacts with CASP8. In terms of tissue distribution, widely expressed in normal tissues but suppressed in prostate and breast tumor.

The protein localises to the cell membrane. Cell death receptor specific for IGFBP3, may mediate caspase-8-dependent apoptosis upon ligand binding. The sequence is that of Insulin-like growth factor-binding protein 3 receptor (TMEM219) from Homo sapiens (Human).